The chain runs to 204 residues: Large ribosomal subunit protein eL15 (204 aa).

It belongs to the eukaryotic ribosomal protein eL15 family. Component of the large ribosomal subunit.

It localises to the cytoplasm. Functionally, component of the large ribosomal subunit. The ribosome is a large ribonucleoprotein complex responsible for the synthesis of proteins in the cell. In Carassius auratus (Goldfish), this protein is Large ribosomal subunit protein eL15 (rpl15).